The sequence spans 709 residues: Anillin-like protein 3 (709 aa).

Residues 584–705 (DMEYRGFLHI…WLSAINDTLD (122 aa)) enclose the PH domain.

This Caenorhabditis elegans protein is Anillin-like protein 3 (ani-3).